Consider the following 434-residue polypeptide: 3-phosphoshikimate 1-carboxyvinyltransferase (434 aa).

The 3-phosphoshikimate site is built by K22, S23, and R27. K22 contributes to the phosphoenolpyruvate binding site. 2 residues coordinate phosphoenolpyruvate: G93 and R121. Residues S168, S169, Q170, S199, D320, and K347 each coordinate 3-phosphoshikimate. Phosphoenolpyruvate is bound at residue Q170. D320 (proton acceptor) is an active-site residue. Phosphoenolpyruvate-binding residues include R351, R394, and K419.

It belongs to the EPSP synthase family. In terms of assembly, monomer.

The protein resides in the cytoplasm. It catalyses the reaction 3-phosphoshikimate + phosphoenolpyruvate = 5-O-(1-carboxyvinyl)-3-phosphoshikimate + phosphate. It participates in metabolic intermediate biosynthesis; chorismate biosynthesis; chorismate from D-erythrose 4-phosphate and phosphoenolpyruvate: step 6/7. Catalyzes the transfer of the enolpyruvyl moiety of phosphoenolpyruvate (PEP) to the 5-hydroxyl of shikimate-3-phosphate (S3P) to produce enolpyruvyl shikimate-3-phosphate and inorganic phosphate. This is 3-phosphoshikimate 1-carboxyvinyltransferase from Burkholderia cenocepacia (strain HI2424).